The sequence spans 61 residues: Small ribosomal subunit protein uS14 (61 aa).

Zn(2+) is bound by residues C24, C27, C40, and C43.

Belongs to the universal ribosomal protein uS14 family. Zinc-binding uS14 subfamily. In terms of assembly, part of the 30S ribosomal subunit. Contacts proteins S3 and S10. Requires Zn(2+) as cofactor.

Its function is as follows. Binds 16S rRNA, required for the assembly of 30S particles and may also be responsible for determining the conformation of the 16S rRNA at the A site. This chain is Small ribosomal subunit protein uS14, found in Ruminiclostridium cellulolyticum (strain ATCC 35319 / DSM 5812 / JCM 6584 / H10) (Clostridium cellulolyticum).